A 512-amino-acid chain; its full sequence is Colistin resistance protein EmrB (512 aa).

14 helical membrane-spanning segments follow: residues 17–37 (WAIF…IQIV), 55–75 (VTWV…MSSI), 84–104 (VYYT…ALSW), 115–135 (IQGF…YLLF), 144–164 (LVMF…IGGW), 169–189 (FSWH…ATVI), 205–225 (SMDW…EYFL), 234–254 (LADT…MIFF), 280–300 (ITTF…PVFL), 314–334 (VMMV…WLIP), 341–361 (TVFV…HLSI), 376–396 (GIGL…TLPL), 412–432 (IGGA…TAMH), and 486–506 (FNDL…LTIF).

It belongs to the major facilitator superfamily. EmrB family.

The protein resides in the cell inner membrane. Its function is as follows. Probably part of an efflux pump system that contributes to adaptation to osmotic stress and resistance to colistin. This is Colistin resistance protein EmrB from Acinetobacter baumannii (strain ATCC 17978 / DSM 105126 / CIP 53.77 / LMG 1025 / NCDC KC755 / 5377).